The following is a 670-amino-acid chain: DNA ligase (670 aa).

Residues 34 to 38, 83 to 84, and Glu-113 each bind NAD(+); these read DFEFD and SL. Lys-115 (N6-AMP-lysine intermediate) is an active-site residue. Positions 136, 173, 288, and 312 each coordinate NAD(+). The Zn(2+) site is built by Cys-406, Cys-409, Cys-424, and Cys-430. Residues 591-670 form the BRCT domain; it reads PESDKFAGKS…EAEFISLLNS (80 aa).

Belongs to the NAD-dependent DNA ligase family. LigA subfamily. It depends on Mg(2+) as a cofactor. The cofactor is Mn(2+).

The enzyme catalyses NAD(+) + (deoxyribonucleotide)n-3'-hydroxyl + 5'-phospho-(deoxyribonucleotide)m = (deoxyribonucleotide)n+m + AMP + beta-nicotinamide D-nucleotide.. DNA ligase that catalyzes the formation of phosphodiester linkages between 5'-phosphoryl and 3'-hydroxyl groups in double-stranded DNA using NAD as a coenzyme and as the energy source for the reaction. It is essential for DNA replication and repair of damaged DNA. This Cytophaga hutchinsonii (strain ATCC 33406 / DSM 1761 / CIP 103989 / NBRC 15051 / NCIMB 9469 / D465) protein is DNA ligase.